The primary structure comprises 184 residues: Shikimate kinase (184 aa).

20–25 (GVGKSR) provides a ligand contact to ATP. Serine 24 is a binding site for Mg(2+). Residues aspartate 42, arginine 66, and glycine 88 each contribute to the substrate site. Arginine 127 lines the ATP pocket. Arginine 146 provides a ligand contact to substrate. Arginine 162 contributes to the ATP binding site.

The protein belongs to the shikimate kinase family. As to quaternary structure, monomer. It depends on Mg(2+) as a cofactor.

The protein resides in the cytoplasm. The enzyme catalyses shikimate + ATP = 3-phosphoshikimate + ADP + H(+). Its pathway is metabolic intermediate biosynthesis; chorismate biosynthesis; chorismate from D-erythrose 4-phosphate and phosphoenolpyruvate: step 5/7. Functionally, catalyzes the specific phosphorylation of the 3-hydroxyl group of shikimic acid using ATP as a cosubstrate. This Thermus thermophilus (strain ATCC BAA-163 / DSM 7039 / HB27) protein is Shikimate kinase.